A 137-amino-acid chain; its full sequence is PALPEDGGSGAFPPGHFKDPKRLYCKNGGFFLRIHPDGRVDGVREKSDPHIKLQLQAEERGVVSIKGVCANRYLAMKEDGRLLASKCVTDECFFFERLESNNYNTYRSRKYSSWYVALKRTGQYKLGSKTGPGQKAI.

Position 27 (Asn-27) interacts with heparin. A Phosphotyrosine; by TEC modification is found at Tyr-73. Lys-86 participates in a covalent cross-link: Glycyl lysine isopeptide (Lys-Gly) (interchain with G-Cter in SUMO1). The heparin-binding stretch occupies residues 119–135 (KRTGQYKLGSKTGPGQK).

This sequence belongs to the heparin-binding growth factors family. Monomer. Homodimer. Interacts with FGFR1, FGFR2, FGFR3 and FGFR4. Affinity between fibroblast growth factors (FGFs) and their receptors is increased by heparan sulfate glycosaminoglycans that function as coreceptors. Interacts with CSPG4, FGFBP1 and TEC. Found in a complex with FGFBP1, FGF1 and FGF2. Interacts with FGFBP3. Interacts with integrin ITGAV:ITGB3; the interaction is required for FGF2 signaling. Interacts with SNORC (via the extracellular domain). Interacts with glypican GPC3. In terms of processing, phosphorylation at Tyr-73 regulates FGF2 unconventional secretion.

It is found in the secreted. The protein resides in the nucleus. Acts as a ligand for FGFR1, FGFR2, FGFR3 and FGFR4. Also acts as an integrin ligand which is required for FGF2 signaling. Binds to integrin ITGAV:ITGB3. Plays an important role in the regulation of cell survival, cell division, cell differentiation and cell migration. Functions as a potent mitogen in vitro. Can induce angiogenesis. Mediates phosphorylation of ERK1/2 and thereby promotes retinal lens fiber differentiation. The sequence is that of Fibroblast growth factor 2 (FGF2) from Oryctolagus cuniculus (Rabbit).